Consider the following 249-residue polypeptide: MLNININKIAKDGYIYSKNIRLAKSKIDKQKCYDVREACSIIKEISFAKFNETVDIAIKLGVNPNHSNQVVRGVAAMPSGTGKTVKVAVICQEEKLDEFKTTGADIVGSLDIIEAIKSGNIDYDVYITTPAMMVAVSQVARILGPKGLMPNPKLGTVTNDVADVVKKVKSGQVEFKVDKAGNIHAGIGKISFSIDEIIANINAFVSAIIKSKPSEAKGAYLKGIYLSTTMGPSVRLDISSFTEISNERR.

Belongs to the universal ribosomal protein uL1 family. In terms of assembly, part of the 50S ribosomal subunit.

In terms of biological role, binds directly to 23S rRNA. The L1 stalk is quite mobile in the ribosome, and is involved in E site tRNA release. Its function is as follows. Protein L1 is also a translational repressor protein, it controls the translation of the L11 operon by binding to its mRNA. The protein is Large ribosomal subunit protein uL1 of Orientia tsutsugamushi (strain Ikeda) (Rickettsia tsutsugamushi).